Reading from the N-terminus, the 508-residue chain is Photosystem II CP47 reaction center protein (508 aa).

Transmembrane regions (helical) follow at residues 21-36 (SVHI…WAGS), 101-115 (IVFS…IWHW), 140-156 (GIHL…FGAF), 203-218 (IAAG…FHLS), 237-252 (VLSS…AFVV), and 457-472 (SFAL…HGAR).

This sequence belongs to the PsbB/PsbC family. PsbB subfamily. PSII is composed of 1 copy each of membrane proteins PsbA, PsbB, PsbC, PsbD, PsbE, PsbF, PsbH, PsbI, PsbJ, PsbK, PsbL, PsbM, PsbT, PsbX, PsbY, PsbZ, Psb30/Ycf12, at least 3 peripheral proteins of the oxygen-evolving complex and a large number of cofactors. It forms dimeric complexes. Requires Binds multiple chlorophylls. PSII binds additional chlorophylls, carotenoids and specific lipids. as cofactor.

The protein localises to the plastid. It is found in the chloroplast thylakoid membrane. Functionally, one of the components of the core complex of photosystem II (PSII). It binds chlorophyll and helps catalyze the primary light-induced photochemical processes of PSII. PSII is a light-driven water:plastoquinone oxidoreductase, using light energy to abstract electrons from H(2)O, generating O(2) and a proton gradient subsequently used for ATP formation. The polypeptide is Photosystem II CP47 reaction center protein (Nuphar advena (Common spatterdock)).